The sequence spans 127 residues: Fluoride-specific ion channel FluC (127 aa).

Transmembrane regions (helical) follow at residues 4-24, 36-56, 68-88, and 99-119; these read SILA…FLGL, GTLL…AYFA, LIIT…AEVV, and AAGA…LGLF. Residues Gly75 and Thr78 each contribute to the Na(+) site.

It belongs to the fluoride channel Fluc/FEX (TC 1.A.43) family.

Its subcellular location is the cell inner membrane. It catalyses the reaction fluoride(in) = fluoride(out). With respect to regulation, na(+) is not transported, but it plays an essential structural role and its presence is essential for fluoride channel function. Fluoride-specific ion channel. Important for reducing fluoride concentration in the cell, thus reducing its toxicity. In Pseudomonas aeruginosa (strain UCBPP-PA14), this protein is Fluoride-specific ion channel FluC.